The primary structure comprises 232 residues: Pseudaminic acid cytidylyltransferase (232 aa).

It belongs to the CMP-NeuNAc synthase family. It depends on Mg(2+) as a cofactor.

It catalyses the reaction pseudaminate + CTP = CMP-pseudaminate + diphosphate. Its function is as follows. Catalyzes the final step in the biosynthesis of pseudaminic acid, a sialic-acid-like sugar that is used to modify flagellin. Mediates the activation of pseudaminic acid with CMP by forming CMP-pseudaminic acid. This chain is Pseudaminic acid cytidylyltransferase (pseF), found in Campylobacter jejuni subsp. jejuni serotype O:23/36 (strain 81-176).